Reading from the N-terminus, the 255-residue chain is Small ribosomal subunit protein uS2 (255 aa).

Positions 232 to 255 (ASGRDLGASEEVPVEPALEEASEA) are disordered.

The protein belongs to the universal ribosomal protein uS2 family.

In Rhizobium meliloti (strain 1021) (Ensifer meliloti), this protein is Small ribosomal subunit protein uS2.